The chain runs to 286 residues: Beta-lactamase SHV-29 (286 aa).

The first 21 residues, 1–21 (MRYIRLCIISLLATLPLAVHA), serve as a signal peptide directing secretion. The Acyl-ester intermediate role is filled by Ser-66. Cys-73 and Cys-119 form a disulfide bridge. The active-site Proton acceptor is Glu-164. 230–232 (KTG) is a binding site for substrate.

This sequence belongs to the class-A beta-lactamase family.

It catalyses the reaction a beta-lactam + H2O = a substituted beta-amino acid. The polypeptide is Beta-lactamase SHV-29 (bla) (Klebsiella pneumoniae).